The sequence spans 420 residues: tRNA(Ile)-lysidine synthase, chloroplastic (420 aa).

63 to 68 (SGGQDS) serves as a coordination point for ATP.

It belongs to the tRNA(Ile)-lysidine synthase family.

It localises to the plastid. It is found in the chloroplast. It carries out the reaction cytidine(34) in tRNA(Ile2) + L-lysine + ATP = lysidine(34) in tRNA(Ile2) + AMP + diphosphate + H(+). In terms of biological role, ligates lysine onto the cytidine present at position 34 of the AUA codon-specific tRNA(Ile) that contains the anticodon CAU, in an ATP-dependent manner. Cytidine is converted to lysidine, thus changing the amino acid specificity of the tRNA from methionine to isoleucine. This Zygnema circumcarinatum (Green alga) protein is tRNA(Ile)-lysidine synthase, chloroplastic.